Reading from the N-terminus, the 219-residue chain is Redox-sensing transcriptional repressor Rex (219 aa).

Positions 17–56 form a DNA-binding region, H-T-H motif; sequence LYYRIFKRFHRENIVKTSSKQIAEAIGIDPATVRRDFSYF. 91–96 serves as a coordination point for NAD(+); that stretch reads GVGNIG.

It belongs to the transcriptional regulatory Rex family. As to quaternary structure, homodimer.

Its subcellular location is the cytoplasm. Modulates transcription in response to changes in cellular NADH/NAD(+) redox state. The protein is Redox-sensing transcriptional repressor Rex of Streptococcus thermophilus (strain ATCC BAA-491 / LMD-9).